We begin with the raw amino-acid sequence, 445 residues long: Phosphoglucosamine mutase (445 aa).

Serine 99 functions as the Phosphoserine intermediate in the catalytic mechanism. Positions 99, 242, 244, and 246 each coordinate Mg(2+). The residue at position 99 (serine 99) is a Phosphoserine.

The protein belongs to the phosphohexose mutase family. Mg(2+) serves as cofactor. Post-translationally, activated by phosphorylation.

It carries out the reaction alpha-D-glucosamine 1-phosphate = D-glucosamine 6-phosphate. Its function is as follows. Catalyzes the conversion of glucosamine-6-phosphate to glucosamine-1-phosphate. The polypeptide is Phosphoglucosamine mutase (Helicobacter pylori (strain P12)).